The chain runs to 234 residues: Purine nucleoside phosphorylase DeoD-type (234 aa).

His4 contacts a purine D-ribonucleoside. Residues Gly20, Arg24, Arg43, and 87-90 each bind phosphate; that span reads RIGS. A purine D-ribonucleoside-binding positions include 179-181 and 203-204; these read DME and SD. Catalysis depends on Asp204, which acts as the Proton donor.

Belongs to the PNP/UDP phosphorylase family. In terms of assembly, homohexamer; trimer of homodimers.

It carries out the reaction a purine D-ribonucleoside + phosphate = a purine nucleobase + alpha-D-ribose 1-phosphate. The catalysed reaction is a purine 2'-deoxy-D-ribonucleoside + phosphate = a purine nucleobase + 2-deoxy-alpha-D-ribose 1-phosphate. Functionally, catalyzes the reversible phosphorolytic breakdown of the N-glycosidic bond in the beta-(deoxy)ribonucleoside molecules, with the formation of the corresponding free purine bases and pentose-1-phosphate. This Shewanella oneidensis (strain ATCC 700550 / JCM 31522 / CIP 106686 / LMG 19005 / NCIMB 14063 / MR-1) protein is Purine nucleoside phosphorylase DeoD-type.